Reading from the N-terminus, the 178-residue chain is Gamma-crystallin S (178 aa).

An N-acetylserine modification is found at S2. The interval 2–5 (SKSG) is N-terminal arm. 2 Beta/gamma crystallin 'Greek key' domains span residues 6-44 (TKITFYEDKHFQGRHYDCDCDCADFHMYLSRCNSIRVEG) and 45-87 (GTWA…RAVH). The connecting peptide stretch occupies residues 88 to 93 (LSSGGQ). Beta/gamma crystallin 'Greek key' domains follow at residues 94 to 134 (YKIQ…KVLD) and 135 to 177 (GVWI…RRIV).

This sequence belongs to the beta/gamma-crystallin family. Monomer.

Functionally, crystallins are the dominant structural components of the vertebrate eye lens. In Canis lupus familiaris (Dog), this protein is Gamma-crystallin S (CRYGS).